Reading from the N-terminus, the 225-residue chain is Cold-regulated 413 inner membrane protein 1, chloroplastic (225 aa).

The N-terminal 76 residues, 1–76, are a transit peptide targeting the chloroplast; the sequence is MASLCLSSSR…RKRGSSVVCY (76 aa). Position 77 (Ala77) is a topological domain, stromal. The chain crosses the membrane as a helical span at residues 78–98; the sequence is APISANSLQWISTISCLALML. At 99 to 102 the chain is on the chloroplast intermembrane side; that stretch reads ARGT. A helical membrane pass occupies residues 103 to 123; the sequence is GIHKSVVVPLFALHAPSSIVA. Over 124–128 the chain is Stromal; the sequence is WIKGE. A helical transmembrane segment spans residues 129–149; the sequence is YGVWAAFLALIARLFFTFPGE. Topologically, residues 150–151 are chloroplast intermembrane; that stretch reads LE. A helical membrane pass occupies residues 152-172; the sequence is LPFIALLLVIVAPYQVMNIRG. At 173–175 the chain is on the stromal side; that stretch reads KQE. The helical transmembrane segment at 176 to 196 threads the bilayer; sequence GAIIAIAISGFLAFQHFSRAG. Over 197 to 204 the chain is Chloroplast intermembrane; sequence SLEKAYEK. A helical membrane pass occupies residues 205–225; that stretch reads GSVLATVAIIGVTVVSLLLLL.

Belongs to the Cold-regulated 413 protein family.

The protein localises to the plastid. The protein resides in the chloroplast inner membrane. In Arabidopsis thaliana (Mouse-ear cress), this protein is Cold-regulated 413 inner membrane protein 1, chloroplastic (COR413IM1).